The following is a 278-amino-acid chain: MYSLSSVSKHLILVHILALVATQLLLIRSVSSLNMTNSYLNHKCFVSQGKYKPGSAHEKSLEAIIHSISVGENVNSGYDMMSFGDGPDLVCVVLQCRGDSYGSKCRSCFASAMAGLRRRCPRYKGGIIWFDQCLLEISSIDNVGQLNYGDSFCMSNAKNVGDDPFSFILKWDTLFDNISRIAITEKNKNLKDTNKPALYGAGEKRLGTKKKMYGMVQCTDDLSVKACEECLVANILKFQNCWKSGKRGARVLDRSCNFRYELYPFVNAKTGPNSYFKS.

A signal peptide spans 1-32 (MYSLSSVSKHLILVHILALVATQLLLIRSVSS). Gnk2-homologous domains lie at 39–142 (YLNH…SIDN) and 148–265 (YGDS…LYPF).

The protein belongs to the cysteine-rich repeat secretory protein family.

The protein resides in the secreted. This chain is Putative cysteine-rich repeat secretory protein 17 (CRRSP17), found in Arabidopsis thaliana (Mouse-ear cress).